Consider the following 294-residue polypeptide: Protein C3orf33 (294 aa).

A2 carries the N-acetylalanine modification. The chain crosses the membrane as a helical span at residues 40-56 (ISTGMAIAGIMLLLRSI).

In terms of tissue distribution, highly expressed in ileocecal tissue and endometrium.

Its subcellular location is the membrane. It localises to the secreted. Functionally, secreted protein may play a role in transcription regulation via the MAPK3/MAPK1 pathway through an unidentified receptor on the plasma membrane. This Homo sapiens (Human) protein is Protein C3orf33 (C3orf33).